Here is a 1265-residue protein sequence, read N- to C-terminus: Shugoshin 2 (1265 aa).

The stretch at 69 to 116 (KENSRRITTEKMLLQKEVEKLNFENTFLRLKLNNLNKKLIDIEALMNN) forms a coiled coil. Disordered stretches follow at residues 161 to 202 (LTSN…STQD), 230 to 287 (DVPP…NLSA), 305 to 339 (LNCN…SARE), and 381 to 447 (GIKK…GAED). Residues 190–202 (SSGSTTQPLSTQD) are compositionally biased toward polar residues. The span at 232–242 (PPRESHSHSDQ) shows a compositional bias: basic and acidic residues. Polar residues predominate over residues 305 to 322 (LNCNNEINGHTNETNTEM). 2 stretches are compositionally biased toward basic and acidic residues: residues 389-410 (KTNE…EKKR) and 425-446 (IGEK…RGAE). A coiled-coil region spans residues 452–476 (FNNEQLAQMNEQLAQVNELKKMTLQ). The interval 499–526 (EQEETYSLSQSSGKFHQESKFDKGQNSL) is disordered. Positions 503–512 (TYSLSQSSGK) are enriched in polar residues. A coiled-coil region spans residues 603-626 (EQNESNINKLRKKVNRKTEIISGM). The segment covering 1073–1083 (NKMTSKSKKRK) has biased composition (basic residues). The interval 1073-1093 (NKMTSKSKKRKTSIDPSPESH) is disordered. Phosphoserine is present on Ser1144. A disordered region spans residues 1200–1265 (KVNRRTQKSG…EPSLRDKMRR (66 aa)). Over residues 1217–1230 (DLSNTSFVSNNTAE) the composition is skewed to polar residues. A compositionally biased stretch (basic and acidic residues) spans 1231 to 1243 (SENKSEDLSSERT).

Belongs to the shugoshin family. As to quaternary structure, part of an astrin (SPAG5) -kinastrin (SKAP) complex containing KNSTRN, SPAG5, PLK1, DYNLL1 and SGO2. Interacts with CDCA8. Directly interacts with PPP2CA.

It is found in the nucleus. It localises to the chromosome. The protein resides in the centromere. Its subcellular location is the kinetochore. Its function is as follows. Cooperates with PPP2CA to protect centromeric cohesin from separase-mediated cleavage in oocytes specifically during meiosis I. Has a crucial role in protecting REC8 at centromeres from cleavage by separase. During meiosis, protects centromeric cohesion complexes until metaphase II/anaphase II transition, preventing premature release of meiosis-specific REC8 cohesin complexes from anaphase I centromeres. Is thus essential for an accurate gametogenesis. May act by targeting PPP2CA to centromeres, thus leading to cohesin dephosphorylation. Essential for recruiting KIF2C to the inner centromere and for correcting defective kinetochore attachments. Involved in centromeric enrichment of AUKRB in prometaphase. This is Shugoshin 2 from Homo sapiens (Human).